A 538-amino-acid chain; its full sequence is Probable inorganic phosphate transporter 1-4 (538 aa).

Residues 1-23 (MAGELKVLNALDSAKTQWYHFTA) lie on the Cytoplasmic side of the membrane. Residues 24–44 (IVIAGMGFFTDAYDLFSISLV) traverse the membrane as a helical segment. Over 45–69 (TKLLGRIYYFNPASKSPGSLPPNVS) the chain is Extracellular. A helical membrane pass occupies residues 70–90 (AAVNGVAFCGTLAGQLFFGWL). The Cytoplasmic segment spans residues 91-98 (GDKMGRKK). The helical transmembrane segment at 99–119 (VYGMTLMLMVICCLASGLSFG) threads the bilayer. The Extracellular segment spans residues 120–123 (SSAK). The helical transmembrane segment at 124-144 (GVMATLCFFRFWLGFGIGGDY) threads the bilayer. The Cytoplasmic portion of the chain corresponds to 145-163 (PLSATIMSEYANKRTRGAF). The chain crosses the membrane as a helical span at residues 164–184 (IAAVFAMQGFGNLTGGIVAII). The Extracellular segment spans residues 185-210 (VSAAFKARFDAPAYRDDRAGSTVPQA). Residues 211 to 231 (DYAWRIVLMFGAIPALLTYYW) traverse the membrane as a helical segment. Over 232-294 (RMKMPETARY…RQFLRRHGRH (63 aa)) the chain is Cytoplasmic. Residues 295–315 (LLGTTVCWFVLDIAFYSSNLF) traverse the membrane as a helical segment. The Extracellular portion of the chain corresponds to 316-346 (QKDIYTAVQWLPKADTMSALEEMFKISRAQT). The chain crosses the membrane as a helical span at residues 347–367 (LVALCGTIPGYWFTVFFIDII). Topologically, residues 368–369 (GR) are cytoplasmic. Residues 370 to 390 (FVIQLGGFFFMTAFMLGLAVP) form a helical membrane-spanning segment. Residues 391–396 (YHHWTT) lie on the Extracellular side of the membrane. Residues 397–417 (PGNHIGFVVMYAFTFFFANFG) traverse the membrane as a helical segment. The Cytoplasmic segment spans residues 418 to 440 (PNSTTFIVPAEIFPARLRSTCHG). The helical transmembrane segment at 441 to 461 (ISAAAGKAGAIVGSFGFLYAA) threads the bilayer. The Extracellular segment spans residues 462 to 481 (QSTDASKTDAGYPPGIGVRN). Residues 482–502 (SLFFLAGCNVIGFFFTFLVPE) traverse the membrane as a helical segment. Topologically, residues 503 to 538 (SKGKSLEELSGENEDDDDVPEAPSTADHRTAPAPPA) are cytoplasmic. A disordered region spans residues 507–538 (SLEELSGENEDDDDVPEAPSTADHRTAPAPPA). Positions 511-522 (LSGENEDDDDVP) are enriched in acidic residues.

It belongs to the major facilitator superfamily. Phosphate:H(+) symporter (TC 2.A.1.9) family.

Its subcellular location is the membrane. Its function is as follows. High-affinity transporter for external inorganic phosphate. This Oryza sativa subsp. indica (Rice) protein is Probable inorganic phosphate transporter 1-4 (PHT1-4).